A 212-amino-acid polypeptide reads, in one-letter code: Inner membrane-spanning protein YciB (212 aa).

A run of 5 helical transmembrane segments spans residues 49-69 (APVL…VLYL), 78-98 (TMLW…IWFH), 105-125 (WKPS…PIVA), 150-170 (LAWA…AYNF), and 178-198 (FKAF…GLYM).

Belongs to the YciB family.

The protein resides in the cell inner membrane. Plays a role in cell envelope biogenesis, maintenance of cell envelope integrity and membrane homeostasis. The sequence is that of Inner membrane-spanning protein YciB from Leptothrix cholodnii (strain ATCC 51168 / LMG 8142 / SP-6) (Leptothrix discophora (strain SP-6)).